The sequence spans 419 residues: UDP-N-acetylglucosamine 1-carboxyvinyltransferase (419 aa).

Phosphoenolpyruvate is bound at residue 22-23 (KN). Arginine 95 lines the UDP-N-acetyl-alpha-D-glucosamine pocket. Cysteine 119 (proton donor) is an active-site residue. Position 119 is a 2-(S-cysteinyl)pyruvic acid O-phosphothioketal (cysteine 119). Residues 164-167 (KVSV), aspartate 308, and isoleucine 330 contribute to the UDP-N-acetyl-alpha-D-glucosamine site.

This sequence belongs to the EPSP synthase family. MurA subfamily.

It is found in the cytoplasm. It catalyses the reaction phosphoenolpyruvate + UDP-N-acetyl-alpha-D-glucosamine = UDP-N-acetyl-3-O-(1-carboxyvinyl)-alpha-D-glucosamine + phosphate. Its pathway is cell wall biogenesis; peptidoglycan biosynthesis. Functionally, cell wall formation. Adds enolpyruvyl to UDP-N-acetylglucosamine. The protein is UDP-N-acetylglucosamine 1-carboxyvinyltransferase of Rickettsia africae (strain ESF-5).